The sequence spans 313 residues: Transaldolase (313 aa).

Lys-125 functions as the Schiff-base intermediate with substrate in the catalytic mechanism.

It belongs to the transaldolase family. Type 1 subfamily. As to quaternary structure, homodimer.

The protein resides in the cytoplasm. It catalyses the reaction D-sedoheptulose 7-phosphate + D-glyceraldehyde 3-phosphate = D-erythrose 4-phosphate + beta-D-fructose 6-phosphate. Its pathway is carbohydrate degradation; pentose phosphate pathway; D-glyceraldehyde 3-phosphate and beta-D-fructose 6-phosphate from D-ribose 5-phosphate and D-xylulose 5-phosphate (non-oxidative stage): step 2/3. Transaldolase is important for the balance of metabolites in the pentose-phosphate pathway. The protein is Transaldolase of Pseudomonas syringae pv. syringae (strain B728a).